A 27-amino-acid polypeptide reads, in one-letter code: Alpha-benincasin (27 aa).

Its function is as follows. Has weak antifungal activity toward C.comatus and P.piricola but not toward M.arachidicola. Inhibits cell-free translation in rabbit reticulocyte lysate system. The sequence is that of Alpha-benincasin from Benincasa hispida (Wax gourd).